A 350-amino-acid chain; its full sequence is UDP-N-acetylenolpyruvoylglucosamine reductase (350 aa).

The FAD-binding PCMH-type domain maps to 25-194 (VGPVARRLIT…LDVGGRSAPL (170 aa)). The active site involves R166. S243 functions as the Proton donor in the catalytic mechanism. Residue E342 is part of the active site.

It belongs to the MurB family. Requires FAD as cofactor.

It localises to the cytoplasm. The enzyme catalyses UDP-N-acetyl-alpha-D-muramate + NADP(+) = UDP-N-acetyl-3-O-(1-carboxyvinyl)-alpha-D-glucosamine + NADPH + H(+). It participates in cell wall biogenesis; peptidoglycan biosynthesis. In terms of biological role, cell wall formation. This is UDP-N-acetylenolpyruvoylglucosamine reductase from Mycobacterium sp. (strain MCS).